A 178-amino-acid polypeptide reads, in one-letter code: Major urinary protein 4 (178 aa).

A signal peptide spans 1–16 (MKLLLCLGLTLVCIHA). Cys80 and Cys173 are joined by a disulfide.

It belongs to the calycin superfamily. Lipocalin family. In terms of tissue distribution, expressed in lacrimal gland, parotid gland, sublingual gland, nasal mucus, and vomeronasal organ.

Its subcellular location is the secreted. Its function is as follows. Binds pheromones, likely to displace pheromones complexed to urinary MUPs and transport them to the vomeronasal organ (VNO) where they associate with their neuronal receptor(s). MUP4 is highly specific for the male mouse pheromone 2-sec-butyl-4,5-dihydrothiazole (SBT). The protein is Major urinary protein 4 (Mup4) of Mus musculus (Mouse).